Reading from the N-terminus, the 115-residue chain is NADH-ubiquinone oxidoreductase chain 3 (115 aa).

3 helical membrane-spanning segments follow: residues 4–24 (LVAL…AFWL), 55–75 (FFLV…LLPL), and 87–107 (MMLT…YEWM).

This sequence belongs to the complex I subunit 3 family. Core subunit of respiratory chain NADH dehydrogenase (Complex I) which is composed of 45 different subunits. Interacts with TMEM186. Interacts with TMEM242.

The protein localises to the mitochondrion inner membrane. It catalyses the reaction a ubiquinone + NADH + 5 H(+)(in) = a ubiquinol + NAD(+) + 4 H(+)(out). Functionally, core subunit of the mitochondrial membrane respiratory chain NADH dehydrogenase (Complex I) which catalyzes electron transfer from NADH through the respiratory chain, using ubiquinone as an electron acceptor. Essential for the catalytic activity of complex I. The polypeptide is NADH-ubiquinone oxidoreductase chain 3 (Habromys lophurus (Crested-tailed deer mouse)).